A 345-amino-acid chain; its full sequence is UDP-N-acetylenolpyruvoylglucosamine reductase (345 aa).

The FAD-binding PCMH-type domain maps to 15-218; the sequence is VDVYAEKVII…NTIIFLRYKK (204 aa). Residue R161 is part of the active site. S230 acts as the Proton donor in catalysis. Residue E327 is part of the active site.

This sequence belongs to the MurB family. FAD is required as a cofactor.

It localises to the cytoplasm. The enzyme catalyses UDP-N-acetyl-alpha-D-muramate + NADP(+) = UDP-N-acetyl-3-O-(1-carboxyvinyl)-alpha-D-glucosamine + NADPH + H(+). It participates in cell wall biogenesis; peptidoglycan biosynthesis. In terms of biological role, cell wall formation. The chain is UDP-N-acetylenolpyruvoylglucosamine reductase from Blochmanniella floridana.